We begin with the raw amino-acid sequence, 527 residues long: EGF domain-specific O-linked N-acetylglucosamine transferase (527 aa).

The N-terminal stretch at 1–19 (MLMLLVFGVLLHEVPLSGQ) is a signal peptide. The Required for optimal activity signature appears at 295–297 (DYD). N354 is a glycosylation site (N-linked (GlcNAc...) asparagine). The Prevents secretion from ER signature appears at 524–527 (HDEL).

It belongs to the glycosyltransferase 61 family. As to expression, widely expressed. Expressed in brain, heart, kidney, lung, skeletal muscles and thymus. Highest expression is observed in lung and the lowest in skeletal muscles.

Its subcellular location is the endoplasmic reticulum lumen. The catalysed reaction is L-seryl-[protein] + UDP-N-acetyl-alpha-D-glucosamine = 3-O-(N-acetyl-beta-D-glucosaminyl)-L-seryl-[protein] + UDP + H(+). The enzyme catalyses L-threonyl-[protein] + UDP-N-acetyl-alpha-D-glucosamine = 3-O-(N-acetyl-beta-D-glucosaminyl)-L-threonyl-[protein] + UDP + H(+). Functionally, catalyzes the transfer of a single N-acetylglucosamine from UDP-GlcNAc to a serine or threonine residue in extracellular proteins resulting in their modification with a beta-linked N-acetylglucosamine (O-GlcNAc). Specifically glycosylates the Thr residue located between the fifth and sixth conserved cysteines of folded EGF-like domains. The polypeptide is EGF domain-specific O-linked N-acetylglucosamine transferase (Eogt) (Mus musculus (Mouse)).